A 246-amino-acid polypeptide reads, in one-letter code: DNA polymerase sliding clamp 3 (246 aa).

This sequence belongs to the PCNA family. As to quaternary structure, the subunits circularize to form a toroid; DNA passes through its center. Replication factor C (RFC) is required to load the toroid on the DNA. Forms dimeric complexes with PCNA1 and PCNA2, and trimeric complexes with PCNA123 and PCNA323; does not form homotrimers. Crystal structures show a heterotetramer of 2 PCNA2 and 2 PCNA3, which would be large enough to clamp a Holliday junction.

Sliding clamp subunit that acts as a moving platform for DNA processing. Responsible for tethering the catalytic subunit of DNA polymerase and other proteins to DNA during high-speed replication. Both trimeric complexes inhibit DNA ligase and both 3'-5' and 5'-3' activity of Hel308 (Hjm) helicase, but stimulate Hjc, the Holliday junction cleavage enzyme. The chain is DNA polymerase sliding clamp 3 from Sulfurisphaera tokodaii (strain DSM 16993 / JCM 10545 / NBRC 100140 / 7) (Sulfolobus tokodaii).